Here is a 223-residue protein sequence, read N- to C-terminus: Phosphoribosylformylglycinamidine synthase subunit PurQ (223 aa).

The 220-residue stretch at 4–223 (FAVVVFPGTN…FRSMVEWARK (220 aa)) folds into the Glutamine amidotransferase type-1 domain. Residue cysteine 85 is the Nucleophile of the active site. Catalysis depends on residues histidine 196 and glutamate 198.

As to quaternary structure, part of the FGAM synthase complex composed of 1 PurL, 1 PurQ and 2 PurS subunits.

Its subcellular location is the cytoplasm. It catalyses the reaction N(2)-formyl-N(1)-(5-phospho-beta-D-ribosyl)glycinamide + L-glutamine + ATP + H2O = 2-formamido-N(1)-(5-O-phospho-beta-D-ribosyl)acetamidine + L-glutamate + ADP + phosphate + H(+). It carries out the reaction L-glutamine + H2O = L-glutamate + NH4(+). It participates in purine metabolism; IMP biosynthesis via de novo pathway; 5-amino-1-(5-phospho-D-ribosyl)imidazole from N(2)-formyl-N(1)-(5-phospho-D-ribosyl)glycinamide: step 1/2. Its function is as follows. Part of the phosphoribosylformylglycinamidine synthase complex involved in the purines biosynthetic pathway. Catalyzes the ATP-dependent conversion of formylglycinamide ribonucleotide (FGAR) and glutamine to yield formylglycinamidine ribonucleotide (FGAM) and glutamate. The FGAM synthase complex is composed of three subunits. PurQ produces an ammonia molecule by converting glutamine to glutamate. PurL transfers the ammonia molecule to FGAR to form FGAM in an ATP-dependent manner. PurS interacts with PurQ and PurL and is thought to assist in the transfer of the ammonia molecule from PurQ to PurL. This Thermococcus kodakarensis (strain ATCC BAA-918 / JCM 12380 / KOD1) (Pyrococcus kodakaraensis (strain KOD1)) protein is Phosphoribosylformylglycinamidine synthase subunit PurQ.